The chain runs to 383 residues: MKTIWLLLATCIHVFAHDELYILIDEVSLYNCRGVKNEITVKEEDVQIVNERGNRVYYIRAPGNYSLDFKKIKVKQNFGFLAGEIGVTLQVPVLEGPAGIRFDLPYTMVPETTLLSQKCDDFSGVIERNGRTYCRYCDLCHVSQAVENELASGRHQFLSQSENDTPISKCYNIESNEYDFRRTIQLPSRSQLEGLIRSKAQGIDDEIKKRLNKGRGRFQVFLNLITSDKPAISLNRWMAGSKDCECCFNRNAPHCDSLSYLYCNMEDCKTGWALQCLHKSAKVAACYTVEFNYRMTTSYSDVLEFLRENNYPNQDSQYTQPNQPLVPTTRRPVTPSFEARQANQLQMTQACVESMPSRMTHLKRYCTIFWNEKLCCEHCPDIC.

A signal peptide spans 1-16 (MKTIWLLLATCIHVFA). An N-linked (GlcNAc...) asparagine glycan is attached at N64.

Interacts with daf-6. As to expression, expressed in sheath and socket glial cells in both the amphid and phasmid ciliated sensory neurons (at protein level).

It is found in the secreted. Its function is as follows. Required for the localization of daf-6 to the socket glial channel and the sheath lumen. In association with daf-6, plays a role in dendrite extension and ciliogenesis to ensure the formation of glial channels in amphid and phasmid ciliated sensory neurons. This Caenorhabditis elegans protein is Protein dyf-4.